We begin with the raw amino-acid sequence, 154 residues long: Large ribosomal subunit protein uL22c (154 aa).

This sequence belongs to the universal ribosomal protein uL22 family. As to quaternary structure, part of the 50S ribosomal subunit.

The protein localises to the plastid. Its subcellular location is the chloroplast. Functionally, this protein binds specifically to 23S rRNA. In terms of biological role, the globular domain of the protein is located near the polypeptide exit tunnel on the outside of the subunit, while an extended beta-hairpin is found that lines the wall of the exit tunnel in the center of the 70S ribosome. The chain is Large ribosomal subunit protein uL22c (rpl22) from Platanus occidentalis (Sycamore).